The chain runs to 113 residues: Probable UPF0122 protein (113 aa).

The protein belongs to the UPF0122 family.

Might take part in the signal recognition particle (SRP) pathway. This is inferred from the conservation of its genetic proximity to ftsY/ffh. May be a regulatory protein. The chain is Probable UPF0122 protein from Mycoplasma mycoides.